Here is a 69-residue protein sequence, read N- to C-terminus: Toxin Tz2 (69 aa).

A signal peptide spans 1–7; sequence IEVVMGG. Residues 8 to 69 enclose the LCN-type CS-alpha/beta domain; sequence KEGYLLDKSN…KMWDLKTNKC (62 aa). 4 disulfide bridges follow: Cys19–Cys69, Cys23–Cys45, Cys31–Cys50, and Cys35–Cys52.

Belongs to the long (4 C-C) scorpion toxin superfamily. Sodium channel inhibitor family. Beta subfamily. Expressed by the venom gland.

Its subcellular location is the secreted. Beta toxins bind voltage-independently at site-4 of sodium channels (Nav) and shift the voltage of activation toward more negative potentials thereby affecting sodium channel activation and promoting spontaneous and repetitive firing. In Tityus zulianus (Venezuelan scorpion), this protein is Toxin Tz2.